The sequence spans 254 residues: Coproheme decarboxylase (254 aa).

Fe-coproporphyrin III is bound by residues arginine 136, 150 to 154 (YPMDK), histidine 177, glutamine 190, and serine 228. Residue tyrosine 150 is part of the active site.

It belongs to the ChdC family. Type 1 subfamily. The cofactor is Fe-coproporphyrin III.

It catalyses the reaction Fe-coproporphyrin III + 2 H2O2 + 2 H(+) = heme b + 2 CO2 + 4 H2O. It carries out the reaction Fe-coproporphyrin III + H2O2 + H(+) = harderoheme III + CO2 + 2 H2O. The enzyme catalyses harderoheme III + H2O2 + H(+) = heme b + CO2 + 2 H2O. It participates in porphyrin-containing compound metabolism; protoheme biosynthesis. Its function is as follows. Involved in coproporphyrin-dependent heme b biosynthesis. Catalyzes the decarboxylation of Fe-coproporphyrin III (coproheme) to heme b (protoheme IX), the last step of the pathway. The reaction occurs in a stepwise manner with a three-propionate intermediate. The polypeptide is Coproheme decarboxylase (Bacillus licheniformis (strain ATCC 14580 / DSM 13 / JCM 2505 / CCUG 7422 / NBRC 12200 / NCIMB 9375 / NCTC 10341 / NRRL NRS-1264 / Gibson 46)).